Here is a 555-residue protein sequence, read N- to C-terminus: Methyl-coenzyme M reductase subunit alpha (555 aa).

Coenzyme F430 is bound at residue Gln-152. Coenzyme B-binding positions include Arg-230, 261–262, and Arg-275; that span reads KH. Coenzyme M contacts are provided by Tyr-337 and Tyr-448.

It belongs to the methyl-coenzyme M reductase alpha subunit family. MCR is a hexamer of two alpha, two beta, and two gamma chains, forming a dimer of heterotrimers. Coenzyme F430 is required as a cofactor.

It is found in the cytoplasm. The catalysed reaction is coenzyme B + methyl-coenzyme M = methane + coenzyme M-coenzyme B heterodisulfide. Its pathway is one-carbon metabolism; methyl-coenzyme M reduction; methane from methyl-coenzyme M: step 1/1. Component of the methyl-coenzyme M reductase (MCR) I that catalyzes the reductive cleavage of methyl-coenzyme M (CoM-S-CH3 or 2-(methylthio)ethanesulfonate) using coenzyme B (CoB or 7-mercaptoheptanoylthreonine phosphate) as reductant which results in the production of methane and the mixed heterodisulfide of CoB and CoM (CoM-S-S-CoB). This is the final step in methanogenesis. The chain is Methyl-coenzyme M reductase subunit alpha (mcrA) from Methanococcus voltae.